The primary structure comprises 111 residues: uncharacterized protein (111 aa).

Positions 66-94 are disordered; that stretch reads PVPTATPSLPRSGFTSSAKKIKESRKQKS. Residues 70–83 are compositionally biased toward polar residues; it reads ATPSLPRSGFTSSA.

It is found in the plastid. Its subcellular location is the chloroplast. This is an uncharacterized protein from Chlamydomonas reinhardtii (Chlamydomonas smithii).